The sequence spans 466 residues: Cysteine--tRNA ligase (466 aa).

C29 serves as a coordination point for Zn(2+). The short motif at 31-41 (PTVYNYIHIGN) is the 'HIGH' region element. The Zn(2+) site is built by C209, H234, and E238. A 'KMSKS' region motif is present at residues 266–270 (KMSKS). K269 is an ATP binding site. Residue S270 is modified to Phosphoserine.

This sequence belongs to the class-I aminoacyl-tRNA synthetase family. Monomer. The cofactor is Zn(2+).

The protein resides in the cytoplasm. It carries out the reaction tRNA(Cys) + L-cysteine + ATP = L-cysteinyl-tRNA(Cys) + AMP + diphosphate. The polypeptide is Cysteine--tRNA ligase (Bacillus velezensis (strain DSM 23117 / BGSC 10A6 / LMG 26770 / FZB42) (Bacillus amyloliquefaciens subsp. plantarum)).